Consider the following 163-residue polypeptide: Small t antigen (163 aa).

Residue methionine 1 is modified to N-acetylmethionine; by host. The J domain maps to 12-76 (LLMELLGLPM…KSLNTDDGFS (65 aa)). A C4-type; atypical zinc finger spans residues 95 to 107 (CSFGSFSCKCLFC). The H1C3-type; atypical zinc finger occupies 113–132 (HKQELTKKPKVWGDCLCFKC).

As to quaternary structure, interacts with host PPP2R1A; the interaction inhibits PP2A activity.

It localises to the host cytoplasm. The protein resides in the host nucleus. Functionally, promotes efficient viral genome replication by accelerating both G1 and S phase progression of the cell cycle. Inhibits host PP2A by binding to the A subunit, thereby displacing lower affinity regulatory B subunit. Inactivation of PP2A in turn results in the transactivation of cyclin A and cyclin D1 promoters. Late during the infection cycle, ST may induce dephosphorylation of host MTOR, leading to the inhibition of cap-dependent translation. May establish and maintain high levels of viral genomes during persistent infection in cell culture. This is Small t antigen from Saimiri boliviensis boliviensis (Bolivian squirrel monkey).